A 305-amino-acid polypeptide reads, in one-letter code: tRNA-cytidine(32) 2-sulfurtransferase (305 aa).

A disordered region spans residues 1–20; that stretch reads MTAVLPLPQPLADPAPRDPR. The PP-loop motif motif lies at 59–64; the sequence is SGGKDS. 3 residues coordinate [4Fe-4S] cluster: cysteine 134, cysteine 137, and cysteine 225. The segment covering 282-293 has biased composition (low complexity); that stretch reads DAPSDVDPDPSA. A disordered region spans residues 282–305; sequence DAPSDVDPDPSAWLSASHAPHDSD.

Belongs to the TtcA family. Homodimer. The cofactor is Mg(2+). [4Fe-4S] cluster is required as a cofactor.

Its subcellular location is the cytoplasm. It catalyses the reaction cytidine(32) in tRNA + S-sulfanyl-L-cysteinyl-[cysteine desulfurase] + AH2 + ATP = 2-thiocytidine(32) in tRNA + L-cysteinyl-[cysteine desulfurase] + A + AMP + diphosphate + H(+). Its pathway is tRNA modification. In terms of biological role, catalyzes the ATP-dependent 2-thiolation of cytidine in position 32 of tRNA, to form 2-thiocytidine (s(2)C32). The sulfur atoms are provided by the cysteine/cysteine desulfurase (IscS) system. This Xanthomonas euvesicatoria pv. vesicatoria (strain 85-10) (Xanthomonas campestris pv. vesicatoria) protein is tRNA-cytidine(32) 2-sulfurtransferase.